A 220-amino-acid polypeptide reads, in one-letter code: Deoxyribose-phosphate aldolase (220 aa).

Asp92 (proton donor/acceptor) is an active-site residue. Catalysis depends on Lys155, which acts as the Schiff-base intermediate with acetaldehyde. Lys184 functions as the Proton donor/acceptor in the catalytic mechanism.

Belongs to the DeoC/FbaB aldolase family. DeoC type 1 subfamily.

Its subcellular location is the cytoplasm. The enzyme catalyses 2-deoxy-D-ribose 5-phosphate = D-glyceraldehyde 3-phosphate + acetaldehyde. The protein operates within carbohydrate degradation; 2-deoxy-D-ribose 1-phosphate degradation; D-glyceraldehyde 3-phosphate and acetaldehyde from 2-deoxy-alpha-D-ribose 1-phosphate: step 2/2. Catalyzes a reversible aldol reaction between acetaldehyde and D-glyceraldehyde 3-phosphate to generate 2-deoxy-D-ribose 5-phosphate. The polypeptide is Deoxyribose-phosphate aldolase (Symbiobacterium thermophilum (strain DSM 24528 / JCM 14929 / IAM 14863 / T)).